A 337-amino-acid polypeptide reads, in one-letter code: Equatorin (337 aa).

Residues 1–20 form the signal peptide; the sequence is MDFILLIILSGVFLPDIISL. Topologically, residues 21–183 are lumenal; the sequence is QPIVGQEPGV…LSELEEIKLK (163 aa). Residues 110–130 are disordered; the sequence is SKPTASGEEEKPSESSRKTST. Residues 117-126 are compositionally biased toward basic and acidic residues; the sequence is EEEKPSESSR. Residue N145 is glycosylated (N-linked (GlcNAc...) asparagine). A helical transmembrane segment spans residues 184 to 204; sequence LMLGISLMTLVLLIPLLIFCF. Residues 205–337 are Cytoplasmic-facing; it reads ATLYKLRHLR…LLNKEGSPSN (133 aa). A disordered region spans residues 259–283; it reads SSEMRRSRTRRSKSKPMDFSAGSNQ. S336 bears the Phosphoserine mark.

In terms of assembly, interacts with SNAP25. Post-translationally, highly N- and O-glycosylated; contains sialic acid. MN9 epitope is O-glycosylated. As to expression, sperm specific, including germ cells (at protein level).

The protein resides in the cytoplasmic vesicle. Its subcellular location is the secretory vesicle. The protein localises to the acrosome membrane. It localises to the acrosome inner membrane. It is found in the acrosome outer membrane. The protein resides in the nucleus. Its subcellular location is the cytoplasm. Functionally, acrosomal membrane-anchored protein involved in the process of fertilization and in acrosome biogenesis. The sequence is that of Equatorin (Eqtn) from Mus musculus (Mouse).